The following is a 166-amino-acid chain: Protein phosphatase 1 regulatory subunit 1A (166 aa).

Position 1 is an N-acetylmethionine (M1). The disordered stretch occupies residues 1–166 (MEQDNSPRKI…SQDSQGASAV (166 aa)). The tract at residues 9–12 (KIQF) is essential for activity. Residues 19 to 29 (PHLDPEAAEQI) show a composition bias toward basic and acidic residues. Phosphothreonine; by PKA is present on T35. The segment at 42-54 (TSDQSSPEVDEDR) is essential for activity. Residues S43, S46, S47, and S67 each carry the phosphoserine modification. Positions 104-114 (AAEGTGAQESQ) are enriched in low complexity. A compositionally biased stretch (basic and acidic residues) spans 143–152 (AQERRGEEPS). An interaction with PPP1R15A region spans residues 143–166 (AQERRGEEPSTAKTSQDSQGASAV). Residues 153–166 (TAKTSQDSQGASAV) show a composition bias toward polar residues.

Belongs to the protein phosphatase inhibitor 1 family. In terms of assembly, interacts with PPP1R15A. Phosphorylation of Thr-35 is required for activity.

Its function is as follows. Inhibitor of protein-phosphatase 1. This protein may be important in hormonal control of glycogen metabolism. Hormones that elevate intracellular cAMP increase I-1 activity in many tissues. I-1 activation may impose cAMP control over proteins that are not directly phosphorylated by PKA. Following a rise in intracellular calcium, I-1 is inactivated by calcineurin (or PP2B). Does not inhibit type-2 phosphatases. This is Protein phosphatase 1 regulatory subunit 1A (PPP1R1A) from Oryctolagus cuniculus (Rabbit).